The chain runs to 118 residues: Ribonuclease P protein component (118 aa).

It belongs to the RnpA family. Consists of a catalytic RNA component (M1 or rnpB) and a protein subunit.

The catalysed reaction is Endonucleolytic cleavage of RNA, removing 5'-extranucleotides from tRNA precursor.. Functionally, RNaseP catalyzes the removal of the 5'-leader sequence from pre-tRNA to produce the mature 5'-terminus. It can also cleave other RNA substrates such as 4.5S RNA. The protein component plays an auxiliary but essential role in vivo by binding to the 5'-leader sequence and broadening the substrate specificity of the ribozyme. The sequence is that of Ribonuclease P protein component from Rickettsia peacockii (strain Rustic).